Reading from the N-terminus, the 2135-residue chain is Plexin-B1 (2135 aa).

An N-terminal signal peptide occupies residues 1–19 (MPALGPALLQALWAGWVLT). The Sema domain occupies 20-479 (LQPLPPTAFT…TQSTLLKVPV (460 aa)). The Extracellular segment spans residues 20–1490 (LQPLPPTAFT…SPGAFPVAAQ (1471 aa)). An N-linked (GlcNAc...) asparagine glycan is attached at Asn31. Cystine bridges form between Cys79–Cys88, Cys111–Cys119, Cys252–Cys377, Cys268–Cys322, Cys340–Cys364, Cys482–Cys499, Cys488–Cys533, Cys491–Cys508, and Cys502–Cys514. Residue Asn334 is glycosylated (N-linked (GlcNAc...) asparagine). N-linked (GlcNAc...) asparagine glycosylation occurs at Asn543. Residues Cys570 and Cys588 are joined by a disulfide bond. Disordered stretches follow at residues 671-829 (MVAS…TTFP) and 849-884 (LPEA…PPAP). Residues 681 to 697 (SPDPPARGGPSPSPPTA) are compositionally biased toward pro residues. Composition is skewed to low complexity over residues 698–710 (PKAL…DTLP) and 734–754 (SPWG…TGSP). 3 IPT/TIG domains span residues 1070–1160 (PLIH…FAYQ), 1162–1249 (PKVH…FKYT), and 1252–1375 (PNIT…FSYE). N-linked (GlcNAc...) asparagine glycans are attached at residues Asn1183, Asn1253, and Asn1330. A helical membrane pass occupies residues 1491–1511 (VGLGVGTSLLALGVIIIVLMY). A coiled-coil region spans residues 1507–1539 (IVLMYRRKSKQALRDYKKVQIQLENLESSVRDR). Residues 1512 to 2135 (RRKSKQALRD…AAVENKVTDL (624 aa)) are Cytoplasmic-facing. Residues 1883–1908 (PWHLVKPSDEPEPPRPRRGSLRGGER) form a disordered region. The span at 1888-1897 (KPSDEPEPPR) shows a compositional bias: basic and acidic residues.

This sequence belongs to the plexin family. Monomer, and heterodimer with PLXNB2 after proteolytic processing. Binds RAC1 that has been activated by GTP binding. Interaction with SEMA4D promotes binding of cytoplasmic ligands. Interacts with PLXNA1. Interacts with ARHGEF11 and ARHGEF12. Interacts with ERBB2. Interacts with MET. Interacts with MST1R. Interacts with RRAS. Interacts with RHOD. Interacts with RND1. Interacts with NRP1 and NRP2. In terms of processing, phosphorylated on tyrosine residues by ERBB2 and MET upon SEMA4D binding. Post-translationally, proteolytic processing favors heterodimerization with PLXNB2 and SEMA4D binding. Highly expressed in fetal kidney, and at slightly lower levels in fetal brain, lung and liver.

Its subcellular location is the cell membrane. The protein localises to the secreted. Receptor for SEMA4D. Plays a role in GABAergic synapse development. Mediates SEMA4A- and SEMA4D-dependent inhibitory synapse development. Plays a role in RHOA activation and subsequent changes of the actin cytoskeleton. Plays a role in axon guidance, invasive growth and cell migration. This chain is Plexin-B1 (PLXNB1), found in Homo sapiens (Human).